The following is a 293-amino-acid chain: Probable metal transport system membrane protein CT_417 (293 aa).

A run of 7 helical transmembrane segments spans residues 18–38 (SLLA…YIVV), 41–61 (IVSI…IALW), 68–88 (LPIS…ICIG), 101–121 (IISM…SKLP), 135–155 (ILWV…FIVA), 187–207 (LLLI…GVIL), and 242–262 (FLGI…IAIL).

The protein belongs to the ABC-3 integral membrane protein family.

The protein localises to the cell inner membrane. Part of an ATP-driven transport system CT_415/CT_416/CT_417 for a metal. The protein is Probable metal transport system membrane protein CT_417 of Chlamydia trachomatis serovar D (strain ATCC VR-885 / DSM 19411 / UW-3/Cx).